A 433-amino-acid chain; its full sequence is Adenylosuccinate synthetase (433 aa).

GTP-binding positions include 11–17 and 39–41; these read GDEGKGK and GHT. Aspartate 12 functions as the Proton acceptor in the catalytic mechanism. 2 residues coordinate Mg(2+): aspartate 12 and glycine 39. IMP is bound by residues 12–15, 37–40, threonine 134, arginine 148, asparagine 230, threonine 245, and arginine 309; these read DEGK and NAGH. Histidine 40 serves as the catalytic Proton donor. 305-311 is a substrate binding site; it reads VTTGRKR. Residues arginine 311, 337-339, and 419-421 each bind GTP; these read KLD and GTG.

Belongs to the adenylosuccinate synthetase family. As to quaternary structure, homodimer. It depends on Mg(2+) as a cofactor.

The protein resides in the cytoplasm. It catalyses the reaction IMP + L-aspartate + GTP = N(6)-(1,2-dicarboxyethyl)-AMP + GDP + phosphate + 2 H(+). It functions in the pathway purine metabolism; AMP biosynthesis via de novo pathway; AMP from IMP: step 1/2. In terms of biological role, plays an important role in the de novo pathway and in the salvage pathway of purine nucleotide biosynthesis. Catalyzes the first committed step in the biosynthesis of AMP from IMP. The chain is Adenylosuccinate synthetase from Saccharomyces cerevisiae (strain Lalvin EC1118 / Prise de mousse) (Baker's yeast).